Here is a 188-residue protein sequence, read N- to C-terminus: MKVAASSLRKGSVVDMDGKLYVVLSAENIHPGKGTPVTQLNMRRISDGVKVSERYRTTEQVERAFVDDRNHTFLYSDGDGYHFMNPESYDQLVATEDVIGDAAPYLQEGMTVILSTHNDVPIAIDLPRTVVLEIVDTEPSVKGQTASSSYKPAVLSNGVKTTVPPYITAGTKVVILTEDGSYVERAKD.

The protein belongs to the elongation factor P family.

Its subcellular location is the cytoplasm. Its pathway is protein biosynthesis; polypeptide chain elongation. In terms of biological role, involved in peptide bond synthesis. Stimulates efficient translation and peptide-bond synthesis on native or reconstituted 70S ribosomes in vitro. Probably functions indirectly by altering the affinity of the ribosome for aminoacyl-tRNA, thus increasing their reactivity as acceptors for peptidyl transferase. This is Elongation factor P from Caulobacter vibrioides (strain ATCC 19089 / CIP 103742 / CB 15) (Caulobacter crescentus).